A 147-amino-acid chain; its full sequence is Deoxyuridine 5'-triphosphate nucleotidohydrolase (147 aa).

Substrate contacts are provided by residues 67 to 69, asparagine 80, and 84 to 86; these read RSG and TID.

Belongs to the dUTPase family. Requires Mg(2+) as cofactor.

It carries out the reaction dUTP + H2O = dUMP + diphosphate + H(+). It functions in the pathway pyrimidine metabolism; dUMP biosynthesis; dUMP from dCTP (dUTP route): step 2/2. Its function is as follows. This enzyme is involved in nucleotide metabolism: it produces dUMP, the immediate precursor of thymidine nucleotides and it decreases the intracellular concentration of dUTP so that uracil cannot be incorporated into DNA. The sequence is that of Deoxyuridine 5'-triphosphate nucleotidohydrolase from Anaplasma marginale (strain St. Maries).